Reading from the N-terminus, the 650-residue chain is Acetyl-coenzyme A synthetase (650 aa).

Residues 191 to 194, Thr-311, and Asn-335 contribute to the CoA site; that span reads RAGR. ATP is bound by residues 387 to 389, 411 to 416, Asp-500, and Arg-515; these read GEP and DTWWQT. CoA is bound at residue Ser-523. ATP is bound at residue Arg-526. Val-537, His-539, and Val-542 together coordinate Mg(2+). Arg-584 serves as a coordination point for CoA. Lys-609 carries the N6-acetyllysine modification.

This sequence belongs to the ATP-dependent AMP-binding enzyme family. Mg(2+) is required as a cofactor. Post-translationally, acetylated. Deacetylation by the SIR2-homolog deacetylase activates the enzyme.

The enzyme catalyses acetate + ATP + CoA = acetyl-CoA + AMP + diphosphate. Catalyzes the conversion of acetate into acetyl-CoA (AcCoA), an essential intermediate at the junction of anabolic and catabolic pathways. AcsA undergoes a two-step reaction. In the first half reaction, AcsA combines acetate with ATP to form acetyl-adenylate (AcAMP) intermediate. In the second half reaction, it can then transfer the acetyl group from AcAMP to the sulfhydryl group of CoA, forming the product AcCoA. This chain is Acetyl-coenzyme A synthetase, found in Shewanella halifaxensis (strain HAW-EB4).